A 401-amino-acid chain; its full sequence is Argininosuccinate synthase (401 aa).

An ATP-binding site is contributed by Ala-9–Ser-17. Position 86 (Tyr-86) interacts with L-citrulline. Gly-116 contacts ATP. Thr-118, Asn-122, and Asp-123 together coordinate L-aspartate. Asn-122 contributes to the L-citrulline binding site. Arg-126, Ser-174, Ser-183, Glu-259, and Tyr-271 together coordinate L-citrulline.

This sequence belongs to the argininosuccinate synthase family. Type 1 subfamily. In terms of assembly, homotetramer.

Its subcellular location is the cytoplasm. The catalysed reaction is L-citrulline + L-aspartate + ATP = 2-(N(omega)-L-arginino)succinate + AMP + diphosphate + H(+). The protein operates within amino-acid biosynthesis; L-arginine biosynthesis; L-arginine from L-ornithine and carbamoyl phosphate: step 2/3. The sequence is that of Argininosuccinate synthase from Bacillus cytotoxicus (strain DSM 22905 / CIP 110041 / 391-98 / NVH 391-98).